The primary structure comprises 55 residues: Large ribosomal subunit protein bL33 (55 aa).

The protein belongs to the bacterial ribosomal protein bL33 family.

This is Large ribosomal subunit protein bL33 from Aeromonas hydrophila subsp. hydrophila (strain ATCC 7966 / DSM 30187 / BCRC 13018 / CCUG 14551 / JCM 1027 / KCTC 2358 / NCIMB 9240 / NCTC 8049).